The sequence spans 462 residues: Solute carrier family 41 member 3 (462 aa).

9 helical membrane-spanning segments follow: residues 41 to 61 (CQVA…GLVM), 121 to 141 (LAVV…ASLM), 163 to 183 (VITA…IVIG), 194 to 214 (IATP…LALM), 225 to 245 (WYLT…WIFI), 258 to 278 (YGWF…LILS), 351 to 371 (VLLF…CLVE), 380 to 400 (IFVL…LYLA), and 424 to 444 (GLGD…DWLL).

It belongs to the SLC41A transporter family.

The protein localises to the mitochondrion inner membrane. It carries out the reaction Mg(2+)(in) + 2 Na(+)(out) = Mg(2+)(out) + 2 Na(+)(in). Na(+)/Mg(2+) ion exchanger that acts as a predominant Mg(2+) efflux system at the mitochondrial inner membrane. The protein is Solute carrier family 41 member 3 (Slc41a3) of Rattus norvegicus (Rat).